Consider the following 511-residue polypeptide: Phospho-2-dehydro-3-deoxyheptonate aldolase 2, chloroplastic (511 aa).

Belongs to the class-II DAHP synthase family. In terms of tissue distribution, leaves, stems, tuber and roots.

It is found in the plastid. The protein resides in the chloroplast. The catalysed reaction is D-erythrose 4-phosphate + phosphoenolpyruvate + H2O = 7-phospho-2-dehydro-3-deoxy-D-arabino-heptonate + phosphate. Its pathway is metabolic intermediate biosynthesis; chorismate biosynthesis; chorismate from D-erythrose 4-phosphate and phosphoenolpyruvate: step 1/7. In Solanum tuberosum (Potato), this protein is Phospho-2-dehydro-3-deoxyheptonate aldolase 2, chloroplastic (SHKB).